Reading from the N-terminus, the 1128-residue chain is MSKTLRKKRHWLSKVQECVVSWGGPAGPDPELLHGGAERGEFPYLAGRLPTGAEGAPGPALLSGKAPAPGDVLLEVNGTPVSGLTHRDTLAVIRHFREPVRLKTVRPGKVINKDLRHYLSLQFQKGSIDHKLQQVIRDNLYLRTIPCTTRAPRDGEVPGVDYNFIPVEQFKALEESGALLESGTYDGNFYGTPKPPAEPSPFQPDPVDQVLFDNDFDTESQRKRTTSVSKMQRMDSSLPEDEEEEEKEAVNGSGGIENKEKHSDSSDWMKPVPSYNQTSSSMDFRNYMSRDETLEPLPKNWEMAYTDTGMIYFIDHNTKTTTWLDPRLCKKAKAPEDCEDGELPYGWEKIEDPQYGTYYVDHINQKTQFENPVLEAKRKKQLGQTDGGPSKSVPEKSLFTRDPSQLIGALIRTSLKKSTMGFGFTIIGGDRPDEFLQVKNVLKDGPAAQDGRIAPGDVIVDINGNCVLGHTHADVVQMFQLVPVNQYVNMTLCRGYPLPDDNEDPVVDIVTATPIINGPPVTKGDICLTSQELIAGTVVLDQNGKTGPMLVNGRLNGPSMDTNEQRISVASSGGSQPELVTIPLVKGPKGFGFAIADSPTGQKVKMILDSQWCQGLQKGDVIKEICHQNVQSLTHLQVVEVLKQFPIGAEVPLLILRGGPPSPTKTGKMKDKQESSGSLEALSDAIPQPMPFPPTAVRSGSPKLDPSEVYLKSKTMYEDKPPNTRDLDVFLRKQESGFGFRVLGGDGADQPIYIGAIIPLGAAEKDGRLRAADELMCIDGVPVKGKSHKQVLDLMTSAARNGQVLLTVRRKIFFGGEKQAEEDESQAVVTQNSSPRLNRAEFATQQSPEVYDVCLQRKENEGFGFVILTSKNKPPPGVIPHKIGRVIDGSPADQCGKLKVGDRISAVNGQSIVELSHDSIVQLIKDAGHVVTLTVVAEEEHRGPPSGTNSAKQSPAPQHRPLGPAQSSASSTDRGATEGEAGKEVSNSYRLSWPEHKHLAQPDAGSASGVGSRHSQAQNSGCFPVELERGPRGFGFSLRGGKEYNMGLFILRLAEDGPAVKDGRVHVGDQIVEINGEPTQGITHTRAIELIQAGGNKVLLLLRPGTGLIPDHSLAPSSLCPYVKPEQH.

One can recognise a PDZ 1 domain in the interval Trp22–Gly108. The Guanylate kinase-like domain maps to Arg116–Arg290. Phe123–His130 contacts ATP. Residues Thr184 to Asn276 form a disordered region. Residues Pro193–Pro204 are compositionally biased toward pro residues. The span at Leu238 to Lys247 shows a compositional bias: acidic residues. Residues Glu257 to Asp267 show a composition bias toward basic and acidic residues. WW domains lie at Glu295–Leu328 and Gly341–Leu374. PDZ domains are found at residues Arg412–Arg494 and Thr581–Arg657. The tract at residues Gly658–Gln688 is disordered. PDZ domains lie at Asp728–Arg810 and Asp852–Glu939. 2 disordered regions span residues Glu939–Val985 and Leu999–Gln1018. Composition is skewed to polar residues over residues Ser946–Ala956 and Ala965–Arg974. The 83-residue stretch at Pro1024–Thr1106 folds into the PDZ 6 domain.

The protein belongs to the MAGUK family.

It is found in the cell membrane. Its subcellular location is the cell junction. It localises to the tight junction. In terms of biological role, acts as a scaffolding protein at cell-cell junctions, thereby regulating various cellular and signaling processes. This chain is Membrane-associated guanylate kinase, WW and PDZ domain-containing protein 3 (MAGI3), found in Gallus gallus (Chicken).